We begin with the raw amino-acid sequence, 273 residues long: Large ribosomal subunit protein uL2cz/uL2cy (273 aa).

Disordered stretches follow at residues 1–23 (MAIHLYKTSTPSTRNGAVDSQVK) and 223–273 (NPVD…RRSK).

This sequence belongs to the universal ribosomal protein uL2 family. As to quaternary structure, part of the 50S ribosomal subunit.

It localises to the plastid. The protein resides in the chloroplast. The protein is Large ribosomal subunit protein uL2cz/uL2cy (rpl2-A) of Oenothera argillicola (Appalachian evening primrose).